We begin with the raw amino-acid sequence, 430 residues long: Long-chain specific acyl-CoA dehydrogenase, mitochondrial (430 aa).

A mitochondrion-targeting transit peptide spans 1–30; that stretch reads MAARLLRGSLRFLGGHCAARPLPALRCSHS. Residue Lys42 is modified to N6-acetyllysine. Phosphoserine is present on residues Ser54 and Ser55. Lys66 and Lys81 each carry N6-acetyllysine; alternate. Residues Lys66 and Lys81 each carry the N6-succinyllysine; alternate modification. N6-acetyllysine is present on residues Lys92 and Lys95. An N6-succinyllysine modification is found at Lys165. Residues 170 to 179 and 203 to 205 contribute to the FAD site; these read IAMTELGAGS and FIS. Residue Ser179 participates in substrate binding. 227–228 contacts substrate; that stretch reads AR. N6-succinyllysine is present on Lys240. Lys254 and Lys279 each carry N6-acetyllysine; alternate. 2 positions are modified to N6-succinyllysine; alternate: Lys254 and Lys279. Substrate contacts are provided by residues Tyr282 and 289 to 292; that span reads PQER. Glu291 acts as the Proton acceptor in catalysis. Arg317 is an FAD binding site. Lys318 bears the N6-acetyllysine mark. Residue Lys322 is modified to N6-acetyllysine; alternate. N6-succinyllysine; alternate is present on Lys322. Gln328 is an FAD binding site. The residue at position 358 (Lys358) is an N6-acetyllysine. Residue Ser362 is modified to Phosphoserine. Position 385 to 389 (385 to 389) interacts with FAD; sequence QLHGG. 412-413 contributes to the substrate binding site; that stretch reads GG. 414–416 contributes to the FAD binding site; it reads TNE.

Belongs to the acyl-CoA dehydrogenase family. In terms of assembly, homotetramer. The cofactor is FAD. Post-translationally, acetylation at Lys-318 and Lys-322 in proximity of the cofactor-binding sites strongly reduces catalytic activity. These sites are deacetylated by SIRT3.

Its subcellular location is the mitochondrion matrix. The enzyme catalyses a long-chain 2,3-saturated fatty acyl-CoA + oxidized [electron-transfer flavoprotein] + H(+) = a long-chain (2E)-enoyl-CoA + reduced [electron-transfer flavoprotein]. It carries out the reaction hexanoyl-CoA + oxidized [electron-transfer flavoprotein] + H(+) = (2E)-hexenoyl-CoA + reduced [electron-transfer flavoprotein]. It catalyses the reaction octanoyl-CoA + oxidized [electron-transfer flavoprotein] + H(+) = (2E)-octenoyl-CoA + reduced [electron-transfer flavoprotein]. The catalysed reaction is decanoyl-CoA + oxidized [electron-transfer flavoprotein] + H(+) = (2E)-decenoyl-CoA + reduced [electron-transfer flavoprotein]. The enzyme catalyses dodecanoyl-CoA + oxidized [electron-transfer flavoprotein] + H(+) = (2E)-dodecenoyl-CoA + reduced [electron-transfer flavoprotein]. It carries out the reaction tetradecanoyl-CoA + oxidized [electron-transfer flavoprotein] + H(+) = (2E)-tetradecenoyl-CoA + reduced [electron-transfer flavoprotein]. It catalyses the reaction oxidized [electron-transfer flavoprotein] + hexadecanoyl-CoA + H(+) = (2E)-hexadecenoyl-CoA + reduced [electron-transfer flavoprotein]. The catalysed reaction is octadecanoyl-CoA + oxidized [electron-transfer flavoprotein] + H(+) = (2E)-octadecenoyl-CoA + reduced [electron-transfer flavoprotein]. The enzyme catalyses eicosanoyl-CoA + oxidized [electron-transfer flavoprotein] + H(+) = (2E)-eicosenoyl-CoA + reduced [electron-transfer flavoprotein]. It carries out the reaction docosanoyl-CoA + oxidized [electron-transfer flavoprotein] + H(+) = (2E)-docosenoyl-CoA + reduced [electron-transfer flavoprotein]. It catalyses the reaction tetracosanoyl-CoA + oxidized [electron-transfer flavoprotein] + H(+) = (2E)-tetracosenoyl-CoA + reduced [electron-transfer flavoprotein]. The catalysed reaction is (5E)-tetradecenoyl-CoA + oxidized [electron-transfer flavoprotein] + H(+) = (2E,5E)-tetradecadienoyl-CoA + reduced [electron-transfer flavoprotein]. The enzyme catalyses (5Z)-tetradecenoyl-CoA + oxidized [electron-transfer flavoprotein] + H(+) = (2E,5Z)-tetradecadienoyl-CoA + reduced [electron-transfer flavoprotein]. It carries out the reaction oxidized [electron-transfer flavoprotein] + (9Z)-octadecenoyl-CoA + H(+) = (2E,9Z)-octadecadienoyl-CoA + reduced [electron-transfer flavoprotein]. Its pathway is lipid metabolism; mitochondrial fatty acid beta-oxidation. Its function is as follows. Long-chain specific acyl-CoA dehydrogenase is one of the acyl-CoA dehydrogenases that catalyze the first step of mitochondrial fatty acid beta-oxidation, an aerobic process breaking down fatty acids into acetyl-CoA and allowing the production of energy from fats. The first step of fatty acid beta-oxidation consists in the removal of one hydrogen from C-2 and C-3 of the straight-chain fatty acyl-CoA thioester, resulting in the formation of trans-2-enoyl-CoA. Among the different mitochondrial acyl-CoA dehydrogenases, long-chain specific acyl-CoA dehydrogenase can act on saturated and unsaturated acyl-CoAs with 6 to 24 carbons with a preference for 8 to 18 carbons long primary chains. The protein is Long-chain specific acyl-CoA dehydrogenase, mitochondrial of Macaca fascicularis (Crab-eating macaque).